The primary structure comprises 149 residues: MKTVTLFSDGSCLNNPGAGGWAYILEFNGAVKKDSGGAAMTTNNQMELTAVIEGLKALKEPCEVRLFTDSSYVANAVNSWLDGWVKKNFIGSDKKPVKNIELWQEYLRVSRPHKVTASWIKAHNGHPQNEECDTMAREKATKFQNEADI.

Positions 1 to 141 (MKTVTLFSDG…CDTMAREKAT (141 aa)) constitute an RNase H type-1 domain. The Mg(2+) site is built by D9, E47, D69, and D133.

Belongs to the RNase H family. In terms of assembly, monomer. Mg(2+) is required as a cofactor.

The protein resides in the cytoplasm. It carries out the reaction Endonucleolytic cleavage to 5'-phosphomonoester.. Functionally, endonuclease that specifically degrades the RNA of RNA-DNA hybrids. This Campylobacter curvus (strain 525.92) protein is Ribonuclease H.